We begin with the raw amino-acid sequence, 157 residues long: Peptide methionine sulfoxide reductase MsrA (157 aa).

Residue C10 is part of the active site.

This sequence belongs to the MsrA Met sulfoxide reductase family.

The enzyme catalyses L-methionyl-[protein] + [thioredoxin]-disulfide + H2O = L-methionyl-(S)-S-oxide-[protein] + [thioredoxin]-dithiol. The catalysed reaction is [thioredoxin]-disulfide + L-methionine + H2O = L-methionine (S)-S-oxide + [thioredoxin]-dithiol. Has an important function as a repair enzyme for proteins that have been inactivated by oxidation. Catalyzes the reversible oxidation-reduction of methionine sulfoxide in proteins to methionine. The chain is Peptide methionine sulfoxide reductase MsrA from Clostridium botulinum (strain Hall / ATCC 3502 / NCTC 13319 / Type A).